A 101-amino-acid chain; its full sequence is NADH-quinone oxidoreductase subunit K (101 aa).

The next 3 helical transmembrane spans lie at 5–25, 29–49, and 62–82; these read LGQV…GVLL, LIMI…VLVG, and VALL…ALVV.

It belongs to the complex I subunit 4L family. As to quaternary structure, NDH-1 is composed of 14 different subunits. Subunits NuoA, H, J, K, L, M, N constitute the membrane sector of the complex.

It is found in the cell inner membrane. It carries out the reaction a quinone + NADH + 5 H(+)(in) = a quinol + NAD(+) + 4 H(+)(out). Functionally, NDH-1 shuttles electrons from NADH, via FMN and iron-sulfur (Fe-S) centers, to quinones in the respiratory chain. The immediate electron acceptor for the enzyme in this species is believed to be ubiquinone. Couples the redox reaction to proton translocation (for every two electrons transferred, four hydrogen ions are translocated across the cytoplasmic membrane), and thus conserves the redox energy in a proton gradient. The polypeptide is NADH-quinone oxidoreductase subunit K (Syntrophotalea carbinolica (strain DSM 2380 / NBRC 103641 / GraBd1) (Pelobacter carbinolicus)).